Reading from the N-terminus, the 213-residue chain is Probable chemoreceptor glutamine deamidase CheD (213 aa).

Positions 1–12 (MNRHRPHSHRSK) are enriched in basic residues. A disordered region spans residues 1–25 (MNRHRPHSHRSKPASTQDQPDSVRR).

The protein belongs to the CheD family.

The enzyme catalyses L-glutaminyl-[protein] + H2O = L-glutamyl-[protein] + NH4(+). In terms of biological role, probably deamidates glutamine residues to glutamate on methyl-accepting chemotaxis receptors (MCPs), playing an important role in chemotaxis. The sequence is that of Probable chemoreceptor glutamine deamidase CheD from Rhodopseudomonas palustris (strain BisA53).